A 466-amino-acid polypeptide reads, in one-letter code: Phytase A (466 aa).

Residues Met1 to Gly19 form the signal peptide. Cys30 and Cys39 are disulfide-bonded. 6 residues coordinate 1D-myo-inositol hexakisphosphate: Gln49, Tyr50, Arg80, His81, Arg84, and Thr87. 4 disulfides stabilise this stretch: Cys70–Cys413, Cys214–Cys464, Cys263–Cys281, and Cys435–Cys443. His81 (nucleophile) is an active-site residue. Residues Asn104 and Asn119 are each glycosylated (N-linked (GlcNAc...) asparagine). A 1D-myo-inositol hexakisphosphate-binding site is contributed by Arg164. Asn206 and Asn219 each carry an N-linked (GlcNAc...) asparagine glycan. A 1D-myo-inositol hexakisphosphate-binding site is contributed by Lys300. Asn338 and Asn351 each carry an N-linked (GlcNAc...) asparagine glycan. His360 and Asp361 together coordinate 1D-myo-inositol hexakisphosphate. Asn375 is a glycosylation site (N-linked (GlcNAc...) asparagine).

Belongs to the histidine acid phosphatase family. As to quaternary structure, monomer.

It localises to the secreted. The catalysed reaction is 1D-myo-inositol hexakisphosphate + H2O = 1D-myo-inositol 1,2,4,5,6-pentakisphosphate + phosphate. The enzyme catalyses 1D-myo-inositol 1,2,4,5,6-pentakisphosphate + H2O = 1D-myo-inositol 1,2,5,6-tetrakisphosphate + phosphate. It carries out the reaction 1D-myo-inositol 1,2,5,6-tetrakisphosphate + H2O = 1D-myo-inositol 1,2,6-trisphosphate + phosphate. It catalyses the reaction 1D-myo-inositol 1,2,6-trisphosphate + H2O = 1D-myo-inositol 1,2-bisphosphate + phosphate. The catalysed reaction is 1D-myo-inositol 1,2-bisphosphate + H2O = 1D-myo-inositol 2-phosphate + phosphate. Functionally, catalyzes the phosphate monoester hydrolysis of phytic acid (myo-inositol hexakisphosphate), which results in the stepwise formation of myo-inositol pentakis-, tetrakis-, tris-, bis-, and monophosphates, as well as the liberation of inorganic phosphate. Myo-inositol 2-monophosphate is the end product. This Aspergillus oryzae (strain ATCC 42149 / RIB 40) (Yellow koji mold) protein is Phytase A (phyA).